The primary structure comprises 224 residues: Urease accessory protein UreF (224 aa).

It belongs to the UreF family. In terms of assembly, ureD, UreF and UreG form a complex that acts as a GTP-hydrolysis-dependent molecular chaperone, activating the urease apoprotein by helping to assemble the nickel containing metallocenter of UreC. The UreE protein probably delivers the nickel.

It is found in the cytoplasm. In terms of biological role, required for maturation of urease via the functional incorporation of the urease nickel metallocenter. In Pseudomonas fluorescens (strain Pf0-1), this protein is Urease accessory protein UreF.